We begin with the raw amino-acid sequence, 875 residues long: Neurotrypsin (875 aa).

The signal sequence occupies residues 1-20; it reads MTLARFVLALVLGALPEVVX. The N-linked (GlcNAc...) asparagine glycan is linked to asparagine 26. A disordered region spans residues 31-88; sequence HRPRHSPPTGPHYPYYLPTQQRPPRTRPPPPLPRFPRPPRALPAQRPHALQAGHTPRP. The span at 56-71 shows a compositional bias: pro residues; the sequence is TRPPPPLPRFPRPPRA. The region spanning 93–165 is the Kringle domain; it reads CPAGEPWVSV…GKVDWGYCDC (73 aa). 20 disulfides stabilise this stretch: cysteine 93–cysteine 165, cysteine 109–cysteine 149, cysteine 138–cysteine 163, cysteine 195–cysteine 259, cysteine 208–cysteine 269, cysteine 239–cysteine 249, cysteine 305–cysteine 369, cysteine 318–cysteine 379, cysteine 349–cysteine 359, cysteine 412–cysteine 475, cysteine 425–cysteine 485, cysteine 455–cysteine 465, cysteine 525–cysteine 589, cysteine 538–cysteine 599, cysteine 569–cysteine 579, cysteine 619–cysteine 750, cysteine 661–cysteine 677, cysteine 765–cysteine 831, cysteine 794–cysteine 808, and cysteine 821–cysteine 850. SRCR domains lie at 170-271, 280-381, 387-487, and 500-601; these read IRLR…TCSF, IRLV…SCTP, IRLA…ACYP, and VRLM…ICDY. The segment at 619 to 630 is zymogen activation region; sequence CGLRLLHRRQKR. Residues 631-874 form the Peptidase S1 domain; sequence IIGGKNSLRG…FVPWIKSVTK (244 aa). Catalysis depends on histidine 676, which acts as the Charge relay system. Residue asparagine 683 is glycosylated (N-linked (GlcNAc...) asparagine). Residue aspartate 726 is the Charge relay system of the active site. Serine 825 serves as the catalytic Charge relay system.

It belongs to the peptidase S1 family.

The protein localises to the secreted. Its function is as follows. Plays a role in neuronal plasticity and the proteolytic action may subserve structural reorganizations associated with learning and memory operations. In Nomascus leucogenys (Northern white-cheeked gibbon), this protein is Neurotrypsin (PRSS12).